The sequence spans 350 residues: Putative ATP-binding protein BruAb2_0487 (350 aa).

Positions 4 to 234 (VSLRGISKTF…PANKFVAGFI (231 aa)) constitute an ABC transporter domain. 36–43 (GPSGCGKS) contributes to the ATP binding site.

Belongs to the ABC transporter superfamily. In terms of assembly, the complex is composed of two ATP-binding proteins (BruAb2_0487), two transmembrane proteins (BruAb2_0483) and a solute-binding protein (BruAb2_0484).

It is found in the cell inner membrane. Functionally, probably part of an ABC transporter complex. Probably responsible for energy coupling to the transport system. In Brucella abortus biovar 1 (strain 9-941), this protein is Putative ATP-binding protein BruAb2_0487.